Consider the following 458-residue polypeptide: Protein adenylyltransferase FICD (458 aa).

Topologically, residues 1-23 (MILMPMASVVAVAEPKWVSVWGR) are cytoplasmic. Residues 24-44 (FLWMTLLSMALGSLLALLLPL) traverse the membrane as a helical; Signal-anchor for type II membrane protein segment. Over 45-458 (GAVEEQCLAV…GFKETLPVRP (414 aa)) the chain is Lumenal. Serine 79 carries the O-AMP-serine; by autocatalysis modification. O-AMP-threonine; by autocatalysis is present on threonine 80. TPR repeat units follow at residues 106-139 (AKAALNQALEMKRQGKRGKAHKLFLHALKMDPGF) and 140-173 (VDALNELGIFSEEDKDIIQADYLYTRALTISPFH). Threonine 183 is modified (O-AMP-threonine; by autocatalysis). Residues 230–235 (TVAIEG) carry the Inhibitory (S/T)XXXE(G/N) motif motif. Glutamate 234 contributes to the ATP binding site. Asparagine 275 carries an N-linked (GlcNAc...) asparagine glycan. One can recognise a Fido domain in the interval 285–420 (VTIDHMLEIH…VRPFIRFIAK (136 aa)). 316–319 (VGHH) contacts ATP. The active site involves histidine 363. ATP-binding positions include 367–374 (DGNGRTSR), 399–400 (YY), and asparagine 407.

The protein belongs to the fic family. In terms of assembly, homodimer. Interacts with HD. The cofactor is Mg(2+). It depends on Mn(2+) as a cofactor. In terms of processing, auto-AMPylated in vitro.

It is found in the endoplasmic reticulum membrane. The catalysed reaction is L-tyrosyl-[protein] + ATP = O-(5'-adenylyl)-L-tyrosyl-[protein] + diphosphate. It catalyses the reaction 3-O-(5'-adenylyl)-L-threonyl-[protein] + H2O = L-threonyl-[protein] + AMP + H(+). The enzyme catalyses L-threonyl-[protein] + ATP = 3-O-(5'-adenylyl)-L-threonyl-[protein] + diphosphate. Its activity is regulated as follows. The side chain of Glu-234 determines which of the two opposing activities (AMPylase or de-AMPylase) will take place. In response to endoplasmic reticulum stress, mediates de-AMPylase activity. Adenylyltransferase activity is inhibited by the inhibitory helix present at the N-terminus: Glu-234 binds ATP and competes with ATP-binding at Arg-374, thereby preventing adenylyltransferase activity. In unstressed cells, disengagement of Glu-234 promotes adenylyltransferase activity. Activation dissociates ATP-binding from Glu-234, allowing ordered binding of the entire ATP moiety with the alpha-phosphate in an orientation that is productive for accepting an incoming target hydroxyl side chain. Functionally, protein that can both mediate the addition of adenosine 5'-monophosphate (AMP) to specific residues of target proteins (AMPylation), and the removal of the same modification from target proteins (de-AMPylation), depending on the context. The side chain of Glu-231 determines which of the two opposing activities (AMPylase or de-AMPylase) will take place. Acts as a key regulator of the ERN1/IRE1-mediated unfolded protein response (UPR) by mediating AMPylation or de-AMPylation of HSPA5/BiP. In unstressed cells, acts as an adenylyltransferase by mediating AMPylation of HSPA5/BiP at 'Thr-518', thereby inactivating it. In response to endoplasmic reticulum stress, acts as a phosphodiesterase by mediating removal of ATP (de-AMPylation) from HSPA5/BiP at 'Thr-518', leading to restore HSPA5/BiP activity. Although it is able to AMPylate RhoA, Rac and Cdc42 Rho GTPases in vitro, Rho GTPases do not constitute physiological substrates. This chain is Protein adenylyltransferase FICD, found in Rattus norvegicus (Rat).